Here is a 1170-residue protein sequence, read N- to C-terminus: Glucose transport transcription regulator RGT1 (1170 aa).

Positions 1–22 are enriched in polar residues; that stretch reads MNELNTVSTNSSDSTKNGGTSN. A disordered region spans residues 1–46; sequence MNELNTVSTNSSDSTKNGGTSNSPDDMDSAAAASHAIKKRTKASRA. The zn(2)-C6 fungal-type DNA-binding region spans 47 to 76; that stretch reads CDQCRKKKIKCDYKDEKGVCSNCQRNGDRC. Positions 77–148 are disordered; the sequence is SFDRVPLKRG…VPSTPSRSNS (72 aa). A compositionally biased stretch (basic and acidic residues) spans 99 to 108; the sequence is RTNEIQDHNN. The span at 113–138 shows a compositional bias: low complexity; it reads NTFDNSNNTLNNNTGNSGDNGINSNT. Residues 139–148 show a composition bias toward polar residues; the sequence is VPSTPSRSNS. Ser-202, Ser-205, Ser-208, and Ser-229 each carry phosphoserine. Polar residues predominate over residues 217–234; it reads PNEQLSYNTVQQSPITNK. 6 disordered regions span residues 217-254, 269-288, 293-343, 384-506, 725-757, and 946-974; these read PNEQ…SASG, APTD…IPSL, SNSL…PSIS, AQQT…HPMT, DEEA…NSPN, and RPPN…GNLN. Residues 239–250 show a composition bias toward low complexity; it reads SGNANGSVTGSG. The span at 271–280 shows a compositional bias: basic and acidic residues; sequence TDDHNGEQTR. 2 positions are modified to phosphoserine: Ser-283 and Ser-284. Low complexity-rich tracts occupy residues 293–302, 309–341, and 385–397; these read SNSLLLGGQP, QQSQ…YNPS, and QQTQ…QVPQ. Ser-410 and Ser-414 each carry phosphoserine. The span at 411–422 shows a compositional bias: polar residues; sequence APVSVTLSTDRL. Residues 424–444 are compositionally biased toward low complexity; it reads GNENNNGEINNNNGSNNSGSS. Residues 445-457 show a composition bias toward polar residues; it reads KDTSQHSQESVTT. Basic residues predominate over residues 473 to 488; the sequence is STKKRRKSYVSKKTKP. The span at 493 to 506 shows a compositional bias: polar residues; the sequence is SISITSKDSAHPMT. Residue Ser-1130 is modified to Phosphoserine.

It belongs to the EDS1/RGT1 family. Post-translationally, glucose-induced phosphorylation regulates the DNA-binding activity. Hyperphosphorylation in cells growing on high levels of glucose does prevents DNA-binding and dephosphorylation restores DNA-binding ability.

The protein localises to the nucleus. It localises to the cytoplasm. Functionally, glucose-responsive transcription factor that regulates expression of several glucose transporter (HXT) genes in response to glucose. In the absence of glucose, it functions as a transcriptional repressor, whereas high concentrations of glucose cause it to function as a transcriptional activator. In cells growing on low levels of glucose, has a neutral role, neither repressing nor activating transcription. Binds the consensus binding site sequence 5'-CGGANNA-3', of which multiple copies are present in all HXT promoters regulated by RGT1. The protein is Glucose transport transcription regulator RGT1 (RGT1) of Saccharomyces cerevisiae (strain YJM789) (Baker's yeast).